Here is a 234-residue protein sequence, read N- to C-terminus: MAASRWARKAVVLLCASDLLLLLLLLPPPGSCAAEGSPGTPDESTPPPRKKKKDIRDYNDADMARLLEQWEKDDDIEEGDLPEHKRPSAPVDFSKIDPSKPESILKMTKKGKTLMMFVTVSGSPTEKETEEITSLWQGSLFNANYDVQRFIVGSDRAIFMLRDGSYAWEIKDFLVGQDRCADVTLEGQVYPGKGGGSKEKNKTKQDKGKKKKEGDLKSRSSKEENRAGNKREDL.

A signal peptide spans 1–33 (MAASRWARKAVVLLCASDLLLLLLLLPPPGSCA). Residues 1 to 164 (MAASRWARKA…DRAIFMLRDG (164 aa)) form a chaperone domain region. Disordered regions lie at residues 31 to 95 (SCAA…DFSK) and 187 to 234 (GQVY…REDL). Basic and acidic residues predominate over residues 54 to 70 (DIRDYNDADMARLLEQW). A compositionally biased stretch (acidic residues) spans 71-80 (EKDDDIEEGD). The escort domain stretch occupies residues 165 to 204 (SYAWEIKDFLVGQDRCADVTLEGQVYPGKGGGSKEKNKTK). Basic and acidic residues predominate over residues 196–234 (GSKEKNKTKQDKGKKKKEGDLKSRSSKEENRAGNKREDL). The N-linked (GlcNAc...) asparagine glycan is linked to N201. A Prevents secretion from ER motif is present at residues 231 to 234 (REDL).

It belongs to the MESD family. Monomer. Interacts with LRP5; the interaction prevents LRP5 from forming aggregates and chaperones LRP6 to the plasma membrane. Interacts with LRP6; the interaction prevents LRP6 from forming aggregates and chaperones LRP6 to the plasma membrane. Interacts with LRP4; the interaction promotes glycosylation of LRP4 and its cell-surface expression.

Its subcellular location is the endoplasmic reticulum. In terms of biological role, chaperone specifically assisting the folding of beta-propeller/EGF modules within the family of low-density lipoprotein receptors (LDLRs). Acts as a modulator of the Wnt pathway through chaperoning the coreceptors of the canonical Wnt pathway, LRP5 and LRP6, to the plasma membrane. Essential for specification of embryonic polarity and mesoderm induction. Plays an essential role in neuromuscular junction (NMJ) formation by promoting cell-surface expression of LRP4. May regulate phagocytosis of apoptotic retinal pigment epithelium (RPE) cells. The polypeptide is LRP chaperone MESD (Homo sapiens (Human)).